A 337-amino-acid polypeptide reads, in one-letter code: DNA-directed RNA polymerase subunit alpha (337 aa).

The segment at 1-233 (MIQKNWQELI…DQLSLFVNFE (233 aa)) is alpha N-terminal domain (alpha-NTD). The interval 249–337 (FNPALLKKVD…DLAKRYEDQY (89 aa)) is alpha C-terminal domain (alpha-CTD).

The protein belongs to the RNA polymerase alpha chain family. In terms of assembly, homodimer. The RNAP catalytic core consists of 2 alpha, 1 beta, 1 beta' and 1 omega subunit. When a sigma factor is associated with the core the holoenzyme is formed, which can initiate transcription.

The catalysed reaction is RNA(n) + a ribonucleoside 5'-triphosphate = RNA(n+1) + diphosphate. In terms of biological role, DNA-dependent RNA polymerase catalyzes the transcription of DNA into RNA using the four ribonucleoside triphosphates as substrates. The chain is DNA-directed RNA polymerase subunit alpha from Bartonella quintana (strain Toulouse) (Rochalimaea quintana).